Consider the following 528-residue polypeptide: Benzoylformate decarboxylase (528 aa).

Residues Asn-117, Leu-118, and Arg-120 each coordinate Mg(2+). The interval 377–460 is thiamine pyrophosphate binding; that stretch reads TSTTAQMWQR…VIMNNGTYGA (84 aa). Asp-428, Asn-455, and Thr-457 together coordinate Ca(2+).

The protein belongs to the TPP enzyme family. In terms of assembly, homotetramer. Ca(2+) serves as cofactor. Thiamine diphosphate is required as a cofactor. Requires Mg(2+) as cofactor.

It catalyses the reaction phenylglyoxylate + H(+) = benzaldehyde + CO2. It functions in the pathway aromatic compound metabolism; (R)-mandelate degradation; benzoate from (R)-mandelate: step 3/4. The polypeptide is Benzoylformate decarboxylase (mdlC) (Pseudomonas putida (Arthrobacter siderocapsulatus)).